The primary structure comprises 258 residues: Sugar fermentation stimulation protein homolog (258 aa).

This sequence belongs to the SfsA family.

The polypeptide is Sugar fermentation stimulation protein homolog (Prochlorococcus marinus (strain NATL2A)).